Here is a 124-residue protein sequence, read N- to C-terminus: Histone H2A (124 aa).

Over residues 1–18 the composition is skewed to basic residues; it reads MSGRGKGGKAKGKSKSRS. A disordered region spans residues 1–23; that stretch reads MSGRGKGGKAKGKSKSRSSRAGL. Ser2 is modified (N-acetylserine). At Ser2 the chain carries Phosphoserine. At Gln104 the chain carries N5-methylglutamine.

Belongs to the histone H2A family. As to quaternary structure, the nucleosome is a histone octamer containing two molecules each of H2A, H2B, H3 and H4 assembled in one H3-H4 heterotetramer and two H2A-H2B heterodimers. The octamer wraps approximately 147 bp of DNA. In terms of processing, the N-terminal serine is acetylated. That serine is also phosphorylated in approximately 60% of the molecules isolated from erythrocytes.

It is found in the nucleus. The protein resides in the chromosome. Functionally, core component of nucleosome. Nucleosomes wrap and compact DNA into chromatin, limiting DNA accessibility to the cellular machineries which require DNA as a template. Histones thereby play a central role in transcription regulation, DNA repair, DNA replication and chromosomal stability. DNA accessibility is regulated via a complex set of post-translational modifications of histones, also called histone code, and nucleosome remodeling. This Sipunculus nudus (Sipunculan worm) protein is Histone H2A.